A 443-amino-acid chain; its full sequence is D-serine dehydratase (443 aa).

The residue at position 118 (K118) is an N6-(pyridoxal phosphate)lysine.

It belongs to the serine/threonine dehydratase family. DsdA subfamily. In terms of assembly, monomer. The cofactor is pyridoxal 5'-phosphate.

It catalyses the reaction D-serine = pyruvate + NH4(+). The sequence is that of D-serine dehydratase from Escherichia coli O17:K52:H18 (strain UMN026 / ExPEC).